A 224-amino-acid polypeptide reads, in one-letter code: Ribonuclease T (224 aa).

The region spanning 20–195 (VVIDVETAGF…YDTQKTAELF (176 aa)) is the Exonuclease domain. Mg(2+) is bound by residues Asp-23, Glu-25, His-182, and Asp-187. His-182 acts as the Proton donor/acceptor in catalysis.

It belongs to the RNase T family. In terms of assembly, homodimer. The cofactor is Mg(2+).

Trims short 3' overhangs of a variety of RNA species, leaving a one or two nucleotide 3' overhang. Responsible for the end-turnover of tRNA: specifically removes the terminal AMP residue from uncharged tRNA (tRNA-C-C-A). Also appears to be involved in tRNA biosynthesis. This chain is Ribonuclease T, found in Vibrio cholerae serotype O1 (strain ATCC 39315 / El Tor Inaba N16961).